Here is a 444-residue protein sequence, read N- to C-terminus: MSERKYFGTDGVRAVAGEFPLTAGWVLNLGAAAGEVLKRRGERPSVVIGKDTRQSGDMLEAALAAGLTSRGVTVIHVGVLPTPGVSYLTRHLGADAGVVISASHNPYADNGIKFFGADGQKLTDATELAIEAAIDEVPNFAPVTGAALGSVTNYTEAERLYIQFLREHAPDLSGLKVAMDCANGAAYRVGPKVFQAAGADVFAVYTTPDGHNINRGCGSTHLEHLQRIVREGDYDLGVAFDGDADRALFVDSRGNVVHGDHMLLLNARARRDRAVVTTIMANMALEVKLREAGIPLERTAVGDRYVHERLHEQGLTLGGEQSGHVLFLDVAPTGDGVLTALLTLSAMKRLGTTLDELHDELVMFPQTLVNVRVGNKKAIARDEVVRAAVQEAEARLRGRGRVNLRPSGTENLIRVMVEGPDEAEIHEIARTLAGVVEKRGRVEV.

Residue Ser-103 is the Phosphoserine intermediate of the active site. The Mg(2+) site is built by Ser-103, Asp-241, Asp-243, and Asp-245. Ser-103 carries the post-translational modification Phosphoserine.

Belongs to the phosphohexose mutase family. The cofactor is Mg(2+). Activated by phosphorylation.

It catalyses the reaction alpha-D-glucosamine 1-phosphate = D-glucosamine 6-phosphate. Its function is as follows. Catalyzes the conversion of glucosamine-6-phosphate to glucosamine-1-phosphate. This Deinococcus geothermalis (strain DSM 11300 / CIP 105573 / AG-3a) protein is Phosphoglucosamine mutase.